Consider the following 192-residue polypeptide: Thymidine kinase (192 aa).

Residues 9–16 (SAMNAGKS) and 87–90 (DECQ) contribute to the ATP site. The Proton acceptor role is filled by Glu88. Zn(2+)-binding residues include Cys145, Cys147, Cys182, and His185.

It belongs to the thymidine kinase family. As to quaternary structure, homotetramer.

It is found in the cytoplasm. It catalyses the reaction thymidine + ATP = dTMP + ADP + H(+). The polypeptide is Thymidine kinase (Vibrio cholerae serotype O1 (strain ATCC 39315 / El Tor Inaba N16961)).